We begin with the raw amino-acid sequence, 328 residues long: GMP reductase (328 aa).

The Thioimidate intermediate role is filled by Cys-176. 205–228 (IIADGGIRTHGDIAKSVRFGATMV) provides a ligand contact to NADP(+).

This sequence belongs to the IMPDH/GMPR family. GuaC type 2 subfamily.

It catalyses the reaction IMP + NH4(+) + NADP(+) = GMP + NADPH + 2 H(+). Catalyzes the irreversible NADPH-dependent deamination of GMP to IMP. It functions in the conversion of nucleobase, nucleoside and nucleotide derivatives of G to A nucleotides, and in maintaining the intracellular balance of A and G nucleotides. This chain is GMP reductase, found in Shouchella clausii (strain KSM-K16) (Alkalihalobacillus clausii).